A 309-amino-acid chain; its full sequence is Malate dehydrogenase (309 aa).

NAD(+) is bound by residues 9–14 (GAGAVG) and Asp-33. Residues Arg-82 and Arg-88 each contribute to the substrate site. NAD(+)-binding positions include Asn-95 and 118-120 (VTN). Substrate-binding residues include Asn-120 and Arg-151. Catalysis depends on His-175, which acts as the Proton acceptor.

This sequence belongs to the LDH/MDH superfamily. MDH type 3 family.

The catalysed reaction is (S)-malate + NAD(+) = oxaloacetate + NADH + H(+). Its function is as follows. Catalyzes the reversible oxidation of malate to oxaloacetate. The protein is Malate dehydrogenase of Thermomicrobium roseum (strain ATCC 27502 / DSM 5159 / P-2).